The chain runs to 620 residues: Chaperone protein HtpG (620 aa).

Positions 1–334 are a; substrate-binding; the sequence is MTTTDTAPQS…SEDLPLNLSR (334 aa). The b stretch occupies residues 335–548; it reads EMLQNNPQLA…GLGPDRALER (214 aa). A c region spans residues 549–620; it reads MLAQQNRGAA…RLNRLVLRAL (72 aa).

It belongs to the heat shock protein 90 family. As to quaternary structure, homodimer.

It localises to the cytoplasm. Molecular chaperone. Has ATPase activity. This is Chaperone protein HtpG from Rhodopseudomonas palustris (strain BisB18).